A 405-amino-acid polypeptide reads, in one-letter code: G1/S-specific cyclin-D (405 aa).

The region spanning 76–200 (FYNCMEYEEA…LIVTTLQWET (125 aa)) is the Cyclin N-terminal domain. The disordered stretch occupies residues 301–405 (YTSEDAEKTE…STPPKIFKTL (105 aa)). Positions 311-321 (PTPSAPASTQE) are enriched in polar residues. The span at 326 to 335 (QELKELKEEP) shows a compositional bias: basic and acidic residues. Polar residues predominate over residues 358–380 (SEQTPSTPLNDSGFSSDVSSPAS).

It belongs to the cyclin family. Cyclin D subfamily. As to quaternary structure, interacts with cdk-4; the interaction is likely involved in regulating cdk-4 activity.

In association with cdk-4, regulates the progression through the G1 phase of the cell cycle during postembryonic development. Regulates proliferation of the coelomocyte lineage and intestinal cells during late embryogenesis. In complex with cdk-4, involved in sex determination during gonadogenesis by regulating the asymmetric division of the somatic gonadal precursor cell (SGP). In Caenorhabditis elegans, this protein is G1/S-specific cyclin-D.